The following is a 576-amino-acid chain: Arginine--tRNA ligase (576 aa).

The 'HIGH' region signature appears at 126-136; it reads ANPTGPMHIGH.

Belongs to the class-I aminoacyl-tRNA synthetase family. Monomer.

It is found in the cytoplasm. The catalysed reaction is tRNA(Arg) + L-arginine + ATP = L-arginyl-tRNA(Arg) + AMP + diphosphate. The polypeptide is Arginine--tRNA ligase (Rickettsia felis (strain ATCC VR-1525 / URRWXCal2) (Rickettsia azadi)).